Reading from the N-terminus, the 357-residue chain is DNA integrity scanning protein DisA (357 aa).

The region spanning 8–146 is the DAC domain; sequence VKSMINILQL…GNLRYTLKDI (139 aa). ATP contacts are provided by residues glycine 75, leucine 93, and 106–110; that span reads MRHRT.

It belongs to the DisA family. In terms of assembly, homooctamer. The cofactor is Mg(2+).

The enzyme catalyses 2 ATP = 3',3'-c-di-AMP + 2 diphosphate. In terms of biological role, participates in a DNA-damage check-point that is active prior to asymmetric division when DNA is damaged. DisA forms globular foci that rapidly scan along the chromosomes during sporulation, searching for lesions. When a lesion is present, DisA pauses at the lesion site. This triggers a cellular response that culminates in a temporary block in sporulation initiation. Its function is as follows. Also has diadenylate cyclase activity, catalyzing the condensation of 2 ATP molecules into cyclic di-AMP (c-di-AMP). c-di-AMP acts as a signaling molecule that couples DNA integrity with progression of sporulation. The rise in c-di-AMP level generated by DisA while scanning the chromosome, operates as a positive signal that advances sporulation; upon encountering a lesion, the DisA focus arrests at the damaged site and halts c-di-AMP synthesis. In Bacillus mycoides (strain KBAB4) (Bacillus weihenstephanensis), this protein is DNA integrity scanning protein DisA.